Here is a 151-residue protein sequence, read N- to C-terminus: Deoxyuridine 5'-triphosphate nucleotidohydrolase (151 aa).

Residues 70 to 72 (RSG), Asn83, 87 to 89 (LID), and Met97 each bind substrate.

Belongs to the dUTPase family. Mg(2+) serves as cofactor.

The catalysed reaction is dUTP + H2O = dUMP + diphosphate + H(+). It functions in the pathway pyrimidine metabolism; dUMP biosynthesis; dUMP from dCTP (dUTP route): step 2/2. Its function is as follows. This enzyme is involved in nucleotide metabolism: it produces dUMP, the immediate precursor of thymidine nucleotides and it decreases the intracellular concentration of dUTP so that uracil cannot be incorporated into DNA. This Ectopseudomonas mendocina (strain ymp) (Pseudomonas mendocina) protein is Deoxyuridine 5'-triphosphate nucleotidohydrolase.